The sequence spans 597 residues: DNA ligase (597 aa).

ATP is bound at residue glutamate 262. Lysine 264 functions as the N6-AMP-lysine intermediate in the catalytic mechanism. 6 residues coordinate ATP: arginine 269, arginine 284, glutamate 314, phenylalanine 354, arginine 431, and lysine 437.

Belongs to the ATP-dependent DNA ligase family. Mg(2+) is required as a cofactor. It depends on Mn(2+) as a cofactor.

The enzyme catalyses ATP + (deoxyribonucleotide)n-3'-hydroxyl + 5'-phospho-(deoxyribonucleotide)m = (deoxyribonucleotide)n+m + AMP + diphosphate.. It catalyses the reaction ADP + (deoxyribonucleotide)n-3'-hydroxyl + 5'-phospho-(deoxyribonucleotide)m = (deoxyribonucleotide)n+m + AMP + phosphate.. The catalysed reaction is GTP + (deoxyribonucleotide)n-3'-hydroxyl + 5'-phospho-(deoxyribonucleotide)m = (deoxyribonucleotide)n+m + GMP + diphosphate.. With respect to regulation, inhibited by Ca(2+) and Zn(2+). Its function is as follows. DNA ligase that seals nicks in double-stranded DNA during DNA replication, DNA recombination and DNA repair. Can use both ATP and ADP. This chain is DNA ligase, found in Staphylothermus marinus (strain ATCC 43588 / DSM 3639 / JCM 9404 / F1).